The chain runs to 121 residues: Natriuretic peptides B (121 aa).

Residues 1-26 (MDLLKVLSQMILFLLFLYLSPLGGHS) form the signal peptide. The segment at 61–89 (LKDQGLTKEHPKRVLRSQGSTLRVQQRPQ) is disordered. Residues 77-89 (SQGSTLRVQQRPQ) show a composition bias toward polar residues. A disulfide bond links Cys99 and Cys115.

Belongs to the natriuretic peptide family. The precursor molecule is proteolytically cleaved by the endoprotease Furin to produce brain natriuretic peptide 45. May undergo further proteolytic cleavage by various proteases such as DPP4, MME and possibly FAP, to give rise to a variety of shorter peptides. May be cleaved at Ser-91 by the prolyl endopeptidase FAP (seprase) activity (in vitro). May be degraded by IDE. During IDE degradation, the resulting products initially increase the activation of NPR1 and can also stimulate NPR2 to produce cGMP before the fragments are completely degraded and inactivated by IDE (in vitro). Expressed abundantly in the ventricle, and in a lesser extent in the atrium (at protein level).

It is found in the secreted. In terms of biological role, cardiac hormone that plays a key role in mediating cardio-renal homeostasis. May also function as a paracrine antifibrotic factor in the heart. Acts by specifically binding and stimulating NPR1 to produce cGMP, which in turn activates effector proteins that drive various biological responses. Likely involved in regulating the extracellular fluid volume and maintaining the fluid-electrolyte balance through natriuresis, diuresis, kaluresis and chloruresis. This is Natriuretic peptides B (Nppb) from Mus musculus (Mouse).